The chain runs to 173 residues: Mesogenin-1 (173 aa).

The span at Glu-39–Thr-68 shows a compositional bias: polar residues. 2 disordered regions span residues Glu-39 to Gly-69 and Thr-96 to Arg-117. Residues Asp-99–Ala-114 are compositionally biased toward basic residues. A bHLH domain is found at His-109–Leu-163.

Its subcellular location is the nucleus. Its function is as follows. Involved in specifying the paraxial, but not dorsal, mesoderm. May regulate the expression of T-box transcription factors required for mesoderm formation and differentiation, such as brachyury T, wnt8, vegt and eomes. In Xenopus laevis (African clawed frog), this protein is Mesogenin-1 (msgn1).